Here is a 144-residue protein sequence, read N- to C-terminus: Large ribosomal subunit protein uL15 (144 aa).

Positions 20-49 (GRGIGSGLGKTGGRGHKGQKSRSGGFHKVG) are disordered. A compositionally biased stretch (gly residues) spans 21–31 (RGIGSGLGKTG).

This sequence belongs to the universal ribosomal protein uL15 family. As to quaternary structure, part of the 50S ribosomal subunit.

Functionally, binds to the 23S rRNA. The chain is Large ribosomal subunit protein uL15 from Neisseria meningitidis serogroup A / serotype 4A (strain DSM 15465 / Z2491).